Consider the following 423-residue polypeptide: Glutamate-1-semialdehyde 2,1-aminomutase (423 aa).

Residue Lys259 is modified to N6-(pyridoxal phosphate)lysine.

The protein belongs to the class-III pyridoxal-phosphate-dependent aminotransferase family. HemL subfamily. Homodimer. The cofactor is pyridoxal 5'-phosphate.

The protein resides in the cytoplasm. It carries out the reaction (S)-4-amino-5-oxopentanoate = 5-aminolevulinate. It functions in the pathway porphyrin-containing compound metabolism; protoporphyrin-IX biosynthesis; 5-aminolevulinate from L-glutamyl-tRNA(Glu): step 2/2. This chain is Glutamate-1-semialdehyde 2,1-aminomutase, found in Thermosipho melanesiensis (strain DSM 12029 / CIP 104789 / BI429).